The following is a 297-amino-acid chain: Cell division protein ZipA (297 aa).

Met1 is a topological domain (periplasmic). Residues 2-22 (EIGLREWLILIGIIVIAGILF) traverse the membrane as a helical segment. The Cytoplasmic segment spans residues 23 to 297 (DGWRRMRGGK…FERRALTQKR (275 aa)). Residues 48-150 (DEEGGSAEVL…GAAPASSSVK (103 aa)) are disordered. The segment covering 83-92 (ARDREREPKP) has biased composition (basic and acidic residues). Over residues 124–133 (LFADSDDDFA) the composition is skewed to acidic residues. A compositionally biased stretch (polar residues) spans 136 to 149 (NNRSSGAAPASSSV).

Belongs to the ZipA family. Interacts with FtsZ via their C-terminal domains.

The protein resides in the cell inner membrane. Its function is as follows. Essential cell division protein that stabilizes the FtsZ protofilaments by cross-linking them and that serves as a cytoplasmic membrane anchor for the Z ring. Also required for the recruitment to the septal ring of downstream cell division proteins. The sequence is that of Cell division protein ZipA from Pseudomonas putida (strain ATCC 700007 / DSM 6899 / JCM 31910 / BCRC 17059 / LMG 24140 / F1).